Here is a 389-residue protein sequence, read N- to C-terminus: Phospho-N-acetylmuramoyl-pentapeptide-transferase (389 aa).

Transmembrane regions (helical) follow at residues 21-41 (YITMRAVLACATALLIGLVAG), 71-91 (TPTMGGALILIAVAISTLLWA), 97-117 (FVWVVLLVTFGFGWIGWMDDY), 134-154 (FFWQATIGLVAAVYLAFAVSA), 167-187 (WVSSGFAMPLPTRADLIVPFF), 190-210 (VSYPLGVLGFVALTWAVIVGT), 222-242 (GLAIMPTVMVGSALGIFAYVV), 259-279 (AAELMVLCAAIAGAGLAFLWF), 286-306 (VFMGDVGALALGGALGTIAVI), 311-331 (IVLFIMGGVFVVETLSVMMQV), and 366-386 (QVVVRFWIISMMLVLIGLSTL).

This sequence belongs to the glycosyltransferase 4 family. MraY subfamily. Mg(2+) serves as cofactor.

Its subcellular location is the cell inner membrane. It carries out the reaction UDP-N-acetyl-alpha-D-muramoyl-L-alanyl-gamma-D-glutamyl-meso-2,6-diaminopimeloyl-D-alanyl-D-alanine + di-trans,octa-cis-undecaprenyl phosphate = di-trans,octa-cis-undecaprenyl diphospho-N-acetyl-alpha-D-muramoyl-L-alanyl-D-glutamyl-meso-2,6-diaminopimeloyl-D-alanyl-D-alanine + UMP. It participates in cell wall biogenesis; peptidoglycan biosynthesis. Catalyzes the initial step of the lipid cycle reactions in the biosynthesis of the cell wall peptidoglycan: transfers peptidoglycan precursor phospho-MurNAc-pentapeptide from UDP-MurNAc-pentapeptide onto the lipid carrier undecaprenyl phosphate, yielding undecaprenyl-pyrophosphoryl-MurNAc-pentapeptide, known as lipid I. The protein is Phospho-N-acetylmuramoyl-pentapeptide-transferase of Bordetella petrii (strain ATCC BAA-461 / DSM 12804 / CCUG 43448).